We begin with the raw amino-acid sequence, 588 residues long: 2-succinyl-5-enolpyruvyl-6-hydroxy-3-cyclohexene-1-carboxylate synthase (588 aa).

The tract at residues 1–22 (MTTTGSLPAQPSSTSPRTGNPS) is disordered.

This sequence belongs to the TPP enzyme family. MenD subfamily. Homodimer. Mg(2+) serves as cofactor. The cofactor is Mn(2+). It depends on thiamine diphosphate as a cofactor.

It catalyses the reaction isochorismate + 2-oxoglutarate + H(+) = 5-enolpyruvoyl-6-hydroxy-2-succinyl-cyclohex-3-ene-1-carboxylate + CO2. It functions in the pathway quinol/quinone metabolism; 1,4-dihydroxy-2-naphthoate biosynthesis; 1,4-dihydroxy-2-naphthoate from chorismate: step 2/7. Its pathway is quinol/quinone metabolism; menaquinone biosynthesis. Functionally, catalyzes the thiamine diphosphate-dependent decarboxylation of 2-oxoglutarate and the subsequent addition of the resulting succinic semialdehyde-thiamine pyrophosphate anion to isochorismate to yield 2-succinyl-5-enolpyruvyl-6-hydroxy-3-cyclohexene-1-carboxylate (SEPHCHC). The chain is 2-succinyl-5-enolpyruvyl-6-hydroxy-3-cyclohexene-1-carboxylate synthase from Clavibacter michiganensis subsp. michiganensis (strain NCPPB 382).